The following is a 130-amino-acid chain: Small ribosomal subunit protein uS9 (130 aa).

Belongs to the universal ribosomal protein uS9 family.

The sequence is that of Small ribosomal subunit protein uS9 from Streptococcus pyogenes serotype M1.